A 255-amino-acid chain; its full sequence is Tritrans,polycis-undecaprenyl-diphosphate synthase (geranylgeranyl-diphosphate specific) (255 aa).

Aspartate 34 is a catalytic residue. Aspartate 34 is a binding site for Mg(2+). Substrate is bound by residues 35 to 38 (GNRR), histidine 51, and 79 to 81 (STE). Asparagine 82 acts as the Proton acceptor in catalysis. Substrate contacts are provided by residues phenylalanine 83, arginine 85, arginine 204, and 210–212 (RIS). Residue glutamate 223 coordinates Mg(2+).

It belongs to the UPP synthase family. As to quaternary structure, homodimer. Mg(2+) serves as cofactor.

It carries out the reaction geranylgeranyl diphosphate + 7 isopentenyl diphosphate = tri-trans,hepta-cis-undecaprenyl diphosphate + 7 diphosphate. Its function is as follows. Catalyzes the sequential condensation of isopentenyl diphosphate (IPP) with geranylgeranyl diphosphate (GGPP) to yield (2Z,6Z,10Z,14Z,18Z,22Z,26Z,30E,34E,38E)-undecaprenyl diphosphate (tritrans,heptacis-UPP). It is probably the precursor of glycosyl carrier lipids. In Picrophilus torridus (strain ATCC 700027 / DSM 9790 / JCM 10055 / NBRC 100828 / KAW 2/3), this protein is Tritrans,polycis-undecaprenyl-diphosphate synthase (geranylgeranyl-diphosphate specific).